Reading from the N-terminus, the 136-residue chain is UPF0216 protein PH0358 (136 aa).

The protein belongs to the UPF0216 family.

The chain is UPF0216 protein PH0358 from Pyrococcus horikoshii (strain ATCC 700860 / DSM 12428 / JCM 9974 / NBRC 100139 / OT-3).